The sequence spans 14507 residues: Mucin-16 (14507 aa).

The segment covering methionine 1 to leucine 17 has biased composition (low complexity). The disordered stretch occupies residues methionine 1–glycine 138. Over methionine 1 to proline 14451 the chain is Extracellular. 2 stretches are compositionally biased toward polar residues: residues threonine 35–glycine 46 and proline 56–glycine 138. A glycan (N-linked (GlcNAc...) asparagine) is linked at asparagine 139. Disordered regions lie at residues glutamate 160–tryptophan 180, aspartate 198–serine 229, phenylalanine 265–serine 287, leucine 396–valine 554, valine 655–methionine 674, serine 695–lysine 719, and threonine 740–leucine 888. Over residues threonine 166–threonine 178 the composition is skewed to low complexity. Residues proline 212–serine 229 show a composition bias toward polar residues. Composition is skewed to low complexity over residues serine 276–serine 287 and leucine 396–leucine 413. 3 stretches are compositionally biased toward polar residues: residues valine 414 to serine 423, glycine 431 to glutamate 441, and glycine 460 to histidine 478. Asparagine 434 carries an N-linked (GlcNAc...) asparagine glycan. 2 stretches are compositionally biased toward low complexity: residues threonine 485–threonine 497 and alanine 508–alanine 525. The span at glutamine 526–methionine 543 shows a compositional bias: polar residues. 4 stretches are compositionally biased toward polar residues: residues leucine 696–proline 706, threonine 740–threonine 780, asparagine 787–serine 796, and serine 805–isoleucine 821. N-linked (GlcNAc...) asparagine glycosylation is present at asparagine 787. Positions proline 823 to valine 846 are enriched in low complexity. 2 stretches are compositionally biased toward polar residues: residues lysine 847–phenylalanine 860 and threonine 869–leucine 888. Residues asparagine 930 and asparagine 957 are each glycosylated (N-linked (GlcNAc...) asparagine). 4 stretches are compositionally biased toward polar residues: residues serine 949–glutamate 969, glycine 1092–glutamine 1101, glycine 1124–histidine 1137, and serine 1301–serine 1317. 6 disordered regions span residues serine 949–alanine 981, valine 1082–glutamine 1101, proline 1121–threonine 1149, serine 1301–serine 1378, leucine 1593–serine 1641, and leucine 1704–threonine 1757. Over residues threonine 1318–threonine 1328 the composition is skewed to low complexity. Composition is skewed to polar residues over residues serine 1334–leucine 1347, proline 1368–serine 1378, glutamine 1596–threonine 1613, glycine 1621–asparagine 1633, and leucine 1704–methionine 1745. Residue asparagine 1375 is glycosylated (N-linked (GlcNAc...) asparagine). N-linked (GlcNAc...) asparagine glycosylation is present at asparagine 1633. Over residues serine 1746 to threonine 1757 the composition is skewed to low complexity. 3 N-linked (GlcNAc...) asparagine glycosylation sites follow: asparagine 1840, asparagine 1877, and asparagine 1890. The span at aspartate 1846–isoleucine 1908 shows a compositional bias: polar residues. Disordered regions lie at residues aspartate 1846 to arginine 1930, valine 2010 to alanine 2033, tryptophan 2064 to isoleucine 2140, and arginine 2153 to threonine 2177. Low complexity-rich tracts occupy residues serine 2019–alanine 2033 and tryptophan 2064–serine 2085. The segment covering histidine 2111–serine 2132 has biased composition (polar residues). 2 N-linked (GlcNAc...) asparagine glycosylation sites follow: asparagine 2345 and asparagine 2375. 2 disordered regions span residues proline 2393–isoleucine 2455 and serine 2566–alanine 2591. Composition is skewed to low complexity over residues threonine 2417 to serine 2429 and serine 2566 to serine 2583. A glycan (N-linked (GlcNAc...) asparagine) is linked at asparagine 2737. Disordered stretches follow at residues threonine 2789–asparagine 2822, threonine 2838–isoleucine 2885, aspartate 2901–serine 3006, threonine 3019–lysine 3052, threonine 3083–isoleucine 3148, serine 3172–threonine 3235, alanine 3251–asparagine 3276, glycine 3299–threonine 3392, threonine 3415–serine 3436, and valine 3462–proline 3491. A compositionally biased stretch (polar residues) spans serine 2803 to leucine 2819. Positions serine 2864–serine 2875 are enriched in low complexity. Polar residues-rich tracts occupy residues leucine 2876–isoleucine 2885 and aspartate 2901–proline 2918. A compositionally biased stretch (low complexity) spans aspartate 2919–lysine 2931. Polar residues predominate over residues methionine 2942–proline 2968. Residues threonine 3019–serine 3035 show a composition bias toward low complexity. The segment covering serine 3041–lysine 3052 has biased composition (polar residues). The N-linked (GlcNAc...) asparagine glycan is linked to asparagine 3085. The segment covering threonine 3107 to threonine 3116 has biased composition (low complexity). Composition is skewed to polar residues over residues proline 3117–glutamate 3132 and serine 3172–tryptophan 3181. Asparagine 3178 carries an N-linked (GlcNAc...) asparagine glycan. Residues threonine 3188 to proline 3200 show a composition bias toward low complexity. Polar residues-rich tracts occupy residues glutamate 3201 to proline 3214 and alanine 3251 to histidine 3261. Low complexity predominate over residues proline 3263 to threonine 3274. 2 stretches are compositionally biased toward polar residues: residues glycine 3299–methionine 3342 and valine 3360–threonine 3383. Low complexity-rich tracts occupy residues serine 3424–serine 3436 and proline 3477–proline 3491. Asparagine 3501 carries an N-linked (GlcNAc...) asparagine glycan. The span at isoleucine 3538–proline 3555 shows a compositional bias: low complexity. Disordered stretches follow at residues isoleucine 3538–alanine 3588, threonine 3644–threonine 3672, arginine 3794–proline 3829, alanine 3843–alanine 3879, leucine 3914–valine 3982, methionine 4024–arginine 4056, alanine 4094–threonine 4121, and phenylalanine 4138–histidine 4166. Composition is skewed to polar residues over residues glutamine 3812–histidine 3824 and alanine 3848–serine 3868. A compositionally biased stretch (low complexity) spans serine 3916–serine 3927. The segment covering proline 3946–valine 3982 has biased composition (polar residues). Low complexity predominate over residues threonine 4026–threonine 4041. A compositionally biased stretch (polar residues) spans methionine 4095–threonine 4121. Positions serine 4152 to proline 4164 are enriched in low complexity. N-linked (GlcNAc...) asparagine glycans are attached at residues asparagine 4220, asparagine 4498, asparagine 4606, asparagine 4613, and asparagine 4624. 3 disordered regions span residues valine 4728–glutamine 4748, histidine 4845–serine 4961, and valine 5026–serine 5066. Positions lysine 4856–isoleucine 4876 are enriched in polar residues. The N-linked (GlcNAc...) asparagine glycan is linked to asparagine 4861. Low complexity-rich tracts occupy residues proline 4877 to threonine 4914 and threonine 4924 to serine 4939. 2 stretches are compositionally biased toward polar residues: residues aspartate 4944–serine 4961 and valine 5026–threonine 5037. Residues serine 5038 to proline 5047 show a composition bias toward low complexity. Residues alanine 5048 to leucine 5059 show a composition bias toward polar residues. 3 N-linked (GlcNAc...) asparagine glycosylation sites follow: asparagine 5096, asparagine 5131, and asparagine 5228. Disordered stretches follow at residues valine 5128–lysine 5149, glutamate 5221–threonine 5249, and threonine 5271–glutamine 5303. Over residues glutamate 5221–serine 5234 the composition is skewed to polar residues. A compositionally biased stretch (low complexity) spans serine 5280–serine 5293. Residues glutamine 5294–glutamine 5303 are compositionally biased toward polar residues. An N-linked (GlcNAc...) asparagine glycan is attached at asparagine 5320. Disordered regions lie at residues proline 5328–valine 5365, glycine 5381–histidine 5400, asparagine 5426–alanine 5507, alanine 5519–threonine 5538, proline 5624–proline 5654, leucine 5675–glutamate 5696, and isoleucine 5727–serine 5747. Composition is skewed to low complexity over residues serine 5333–valine 5365 and glycine 5381–proline 5393. Residue asparagine 5394 is glycosylated (N-linked (GlcNAc...) asparagine). Polar residues-rich tracts occupy residues asparagine 5426–leucine 5441 and serine 5447–leucine 5485. Asparagine 5470 carries an N-linked (GlcNAc...) asparagine glycan. Composition is skewed to low complexity over residues serine 5495–threonine 5504, serine 5520–serine 5532, serine 5633–proline 5654, and leucine 5675–proline 5688. Asparagine 5689 carries an N-linked (GlcNAc...) asparagine glycan. The span at isoleucine 5727–proline 5737 shows a compositional bias: polar residues. The N-linked (GlcNAc...) asparagine glycan is linked to asparagine 5863. Disordered regions lie at residues serine 5882–valine 5931 and serine 6054–leucine 6078. A compositionally biased stretch (polar residues) spans threonine 5903 to glutamine 5916. Over residues serine 5917–serine 5928 the composition is skewed to low complexity. Residues serine 6054–threonine 6063 are compositionally biased toward polar residues. Asparagine 6088 carries N-linked (GlcNAc...) asparagine glycosylation. Disordered stretches follow at residues proline 6122–isoleucine 6149, asparagine 6219–valine 6251, serine 6399–threonine 6425, threonine 6438–threonine 6459, isoleucine 6497–proline 6545, and threonine 6682–serine 6714. 3 stretches are compositionally biased toward low complexity: residues serine 6134–isoleucine 6149, proline 6226–valine 6251, and serine 6399–serine 6410. Composition is skewed to polar residues over residues isoleucine 6411–threonine 6425 and isoleucine 6445–threonine 6459. Over residues threonine 6500–proline 6523 the composition is skewed to low complexity. Composition is skewed to polar residues over residues leucine 6530–proline 6545 and threonine 6683–threonine 6699. N-linked (GlcNAc...) asparagine glycosylation occurs at asparagine 6732. 3 disordered regions span residues serine 6800–lysine 6822, threonine 6845–histidine 6865, and threonine 6886–threonine 6939. Low complexity predominate over residues threonine 6848–serine 6864. The N-linked (GlcNAc...) asparagine glycan is linked to asparagine 6859. Polar residues predominate over residues threonine 6886–leucine 6905. A compositionally biased stretch (low complexity) spans threonine 6919–threonine 6938. N-linked (GlcNAc...) asparagine glycosylation is present at asparagine 6961. Disordered stretches follow at residues alanine 6981–valine 7004, methionine 7028–serine 7107, threonine 7143–alanine 7208, serine 7279–glutamate 7302, glutamate 7320–threonine 7345, glutamine 7360–threonine 7427, leucine 7437–valine 7456, glutamate 7463–lysine 7503, serine 7527–threonine 7553, threonine 7577–glutamine 7597, alanine 7726–serine 7782, leucine 7825–serine 7849, histidine 7908–threonine 7927, and proline 7970–proline 8000. The span at methionine 7028–glycine 7038 shows a compositional bias: polar residues. Low complexity predominate over residues serine 7039–glutamine 7055. Polar residues predominate over residues lysine 7057 to methionine 7075. Low complexity predominate over residues serine 7086–threonine 7105. The span at glycine 7166 to leucine 7200 shows a compositional bias: polar residues. Positions serine 7279–threonine 7298 are enriched in low complexity. 3 stretches are compositionally biased toward polar residues: residues serine 7322–threonine 7345, glutamine 7360–valine 7371, and serine 7390–isoleucine 7402. Composition is skewed to low complexity over residues serine 7403–threonine 7427 and alanine 7439–serine 7455. The span at phenylalanine 7474 to threonine 7484 shows a compositional bias: polar residues. The segment covering serine 7485–serine 7494 has biased composition (low complexity). Low complexity predominate over residues glycine 7733 to threonine 7749. A compositionally biased stretch (basic and acidic residues) spans serine 7750–alanine 7765. The span at proline 7768–serine 7782 shows a compositional bias: polar residues. 3 stretches are compositionally biased toward low complexity: residues glutamate 7835–threonine 7846, threonine 7915–threonine 7927, and serine 7973–proline 8000. N-linked (GlcNAc...) asparagine glycans are attached at residues asparagine 8029 and asparagine 8055. Disordered stretches follow at residues glutamate 8042 to serine 8078, isoleucine 8111 to leucine 8134, glycine 8312 to glutamate 8331, threonine 8342 to glycine 8389, threonine 8411 to aspartate 8472, methionine 8604 to alanine 8624, serine 8674 to serine 8741, and threonine 8775 to proline 8880. The segment covering proline 8052–serine 8078 has biased composition (polar residues). The segment covering threonine 8319–threonine 8328 has biased composition (low complexity). Asparagine 8324 is a glycosylation site (N-linked (GlcNAc...) asparagine). The segment covering methionine 8345–glycine 8389 has biased composition (polar residues). Residues threonine 8607–alanine 8624 show a composition bias toward low complexity. N-linked (GlcNAc...) asparagine glycosylation is found at asparagine 8618 and asparagine 8684. Composition is skewed to polar residues over residues serine 8674 to valine 8740 and glycine 8781 to alanine 8810. A compositionally biased stretch (low complexity) spans threonine 8850–proline 8880. Asparagine 8913 carries an N-linked (GlcNAc...) asparagine glycan. Disordered regions lie at residues glutamate 8995–lysine 9018 and serine 9147–histidine 9168. Residue asparagine 9202 is glycosylated (N-linked (GlcNAc...) asparagine). Over residues serine 9294 to threonine 9307 the composition is skewed to low complexity. Positions serine 9294 to proline 9460 are disordered. Composition is skewed to polar residues over residues valine 9308–leucine 9357 and serine 9374–methionine 9412. A compositionally biased stretch (low complexity) spans serine 9431–proline 9460. N-linked (GlcNAc...) asparagine glycosylation occurs at asparagine 9493. Disordered regions lie at residues alanine 9611–threonine 9635, serine 9726–serine 9753, valine 9771–valine 9791, and threonine 9869–serine 9890. Polar residues predominate over residues methionine 9621–threonine 9635. Low complexity-rich tracts occupy residues threonine 9774–serine 9790 and glutamate 9881–serine 9890. The N-linked (GlcNAc...) asparagine glycan is linked to asparagine 9785. 2 N-linked (GlcNAc...) asparagine glycosylation sites follow: asparagine 10075 and asparagine 10173. 2 disordered regions span residues serine 10175 to serine 10218 and threonine 10445 to threonine 10469. The segment covering threonine 10178–threonine 10193 has biased composition (low complexity). Residues histidine 10194–proline 10212 show a composition bias toward polar residues. Residue asparagine 10510 is glycosylated (N-linked (GlcNAc...) asparagine). The segment covering serine 10544–serine 10573 has biased composition (polar residues). Disordered stretches follow at residues serine 10544 to serine 10590 and glutamate 10689 to glutamate 10719. N-linked (GlcNAc...) asparagine glycosylation occurs at asparagine 10700. Positions alanine 10708–glutamate 10719 are enriched in polar residues. A glycan (N-linked (GlcNAc...) asparagine) is linked at asparagine 10749. Residues threonine 10849–glutamate 10860 are compositionally biased toward polar residues. Disordered stretches follow at residues threonine 10849 to threonine 10872, leucine 10898 to valine 10926, and leucine 11003 to proline 11036. Residues serine 10861–threonine 10872 are compositionally biased toward low complexity. Positions leucine 11003–serine 11018 are enriched in low complexity. N-linked (GlcNAc...) asparagine glycosylation is present at asparagine 11053. The interval serine 11072 to proline 11092 is disordered. Residues asparagine 11224 and asparagine 11263 are each glycosylated (N-linked (GlcNAc...) asparagine). Composition is skewed to polar residues over residues histidine 11269–phenylalanine 11284 and serine 11358–threonine 11381. Disordered stretches follow at residues histidine 11269–alanine 11301, serine 11358–valine 11400, lysine 11508–threonine 11537, glutamate 11583–arginine 11724, serine 11836–methionine 11861, and glutamine 11913–threonine 11937. Residue asparagine 11367 is glycosylated (N-linked (GlcNAc...) asparagine). Composition is skewed to polar residues over residues glutamate 11583–asparagine 11594, valine 11631–proline 11651, and threonine 11658–phenylalanine 11672. Residue asparagine 11594 is glycosylated (N-linked (GlcNAc...) asparagine). The span at proline 11700–proline 11717 shows a compositional bias: low complexity. Composition is skewed to polar residues over residues proline 11849 to methionine 11861 and glutamine 11913 to serine 11928. A run of 12 repeats spans residues alanine 12067–threonine 12223, threonine 12224–methionine 12381, alanine 12382–alanine 12537, threonine 12538–threonine 12692, threonine 12693–threonine 12848, serine 12849–threonine 13004, threonine 13005–threonine 13160, threonine 13161–threonine 13316, alanine 13317–methionine 13472, threonine 13473–serine 13628, alanine 13629–serine 13784, and alanine 13785–alanine 13939. Residues alanine 12067–alanine 13939 form a 12 X approximate tandem repeats region. The 122-residue stretch at phenylalanine 12072 to histidine 12193 folds into the SEA 1 domain. N-linked (GlcNAc...) asparagine glycans are attached at residues asparagine 12079, asparagine 12100, and asparagine 12116. A disulfide bond links cysteine 12126 and cysteine 12146. Asparagine 12168 carries N-linked (GlcNAc...) asparagine glycosylation. The interval serine 12196–glycine 12226 is disordered. One can recognise an SEA 2 domain in the interval leucine 12228–histidine 12349. N-linked (GlcNAc...) asparagine glycans are attached at residues asparagine 12235 and asparagine 12272. The cysteines at positions 12282 and 12302 are disulfide-linked. The disordered stretch occupies residues valine 12353 to serine 12376. 3 consecutive SEA domains span residues leucine 12386–histidine 12507, leucine 12542–histidine 12663, and leucine 12697–histidine 12818. N-linked (GlcNAc...) asparagine glycans are attached at residues asparagine 12393, asparagine 12414, and asparagine 12430. A disulfide bond links cysteine 12440 and cysteine 12460. N-linked (GlcNAc...) asparagine glycosylation is found at asparagine 12549, asparagine 12570, and asparagine 12586. Cysteine 12596 and cysteine 12616 are oxidised to a cystine. N-linked (GlcNAc...) asparagine glycosylation is found at asparagine 12704, asparagine 12725, and asparagine 12741. Cysteines 12751 and 12771 form a disulfide. The segment covering glutamine 12819–aspartate 12834 has biased composition (polar residues). Positions glutamine 12819–serine 12849 are disordered. The N-linked (GlcNAc...) asparagine glycan is linked to asparagine 12824. Residues leucine 12835 to serine 12849 are compositionally biased toward low complexity. Residues leucine 12853 to histidine 12974 form the SEA 6 domain. Asparagine 12860, asparagine 12881, and asparagine 12897 each carry an N-linked (GlcNAc...) asparagine glycan. Cysteine 12907 and cysteine 12927 are joined by a disulfide. The segment covering valine 12978–aspartate 12990 has biased composition (polar residues). A disordered region spans residues valine 12978–proline 13003. Residues leucine 12991–proline 13003 show a composition bias toward low complexity. SEA domains follow at residues leucine 13009–histidine 13130 and leucine 13165–glutamine 13286. Asparagine 13016, asparagine 13037, and asparagine 13053 each carry an N-linked (GlcNAc...) asparagine glycan. Cysteine 13063 and cysteine 13083 are disulfide-bonded. Asparagine 13172 and asparagine 13193 each carry an N-linked (GlcNAc...) asparagine glycan. A disulfide bridge links cysteine 13219 with cysteine 13239. Positions proline 13291–proline 13313 are enriched in polar residues. The tract at residues proline 13291 to alanine 13317 is disordered. SEA domains lie at valine 13321–histidine 13442 and leucine 13477–glutamine 13598. Residues asparagine 13328, asparagine 13349, and asparagine 13365 are each glycosylated (N-linked (GlcNAc...) asparagine). A disulfide bond links cysteine 13375 and cysteine 13395. 3 N-linked (GlcNAc...) asparagine glycosylation sites follow: asparagine 13484, asparagine 13505, and asparagine 13521. A disulfide bridge links cysteine 13531 with cysteine 13551. Over residues proline 13603 to proline 13621 the composition is skewed to polar residues. The tract at residues proline 13603–proline 13625 is disordered. SEA domains are found at residues leucine 13633 to histidine 13754, leucine 13789 to histidine 13909, serine 13922 to glutamate 14043, and histidine 14073 to proline 14193. 2 N-linked (GlcNAc...) asparagine glycosylation sites follow: asparagine 13640 and asparagine 13661. Cysteine 13687 and cysteine 13707 are disulfide-bonded. Asparagine 13733, asparagine 13744, asparagine 13796, asparagine 13816, asparagine 13832, asparagine 13929, and asparagine 13950 each carry an N-linked (GlcNAc...) asparagine glycan. Cysteine 13976 and cysteine 13996 form a disulfide bridge. N-linked (GlcNAc...) asparagine glycans are attached at residues asparagine 14080 and asparagine 14100. An intrachain disulfide couples cysteine 14126 to cysteine 14146. 6 N-linked (GlcNAc...) asparagine glycosylation sites follow: asparagine 14195, asparagine 14212, asparagine 14254, asparagine 14287, asparagine 14326, and asparagine 14363. SEA domains are found at residues isoleucine 14198 to serine 14309 and serine 14319 to proline 14438. A disulfide bridge connects residues cysteine 14373 and cysteine 14393. Asparagine 14417 and asparagine 14423 each carry an N-linked (GlcNAc...) asparagine glycan. A helical membrane pass occupies residues phenylalanine 14452–cysteine 14472. Topologically, residues glycine 14473–glutamine 14507 are cytoplasmic.

As to quaternary structure, binds to MSLN. Binding to MSLN mediates heterotypic cell adhesion. This may contribute to the metastasis of ovarian cancer to the peritoneum by initiating cell attachment to the mesothelial epithelium via binding to MSLN. In terms of processing, heavily O-glycosylated; expresses both type 1 and type 2 core glycans. Heavily N-glycosylated; expresses primarily high mannose and complex bisecting type N-linked glycans. Post-translationally, may be phosphorylated. Phosphorylation of the intracellular C-terminal domain may induce proteolytic cleavage and the liberation of the extracellular domain into the extracellular space. In terms of processing, may contain numerous disulfide bridges. Association of several molecules of the secreted form may occur through interchain disulfide bridges providing an extraordinarily large gel-like matrix in the extracellular space or in the lumen of secretory ducts. Expressed in corneal and conjunctival epithelia (at protein level). Overexpressed in ovarian carcinomas and ovarian low malignant potential (LMP) tumors as compared to the expression in normal ovarian tissue and ovarian adenomas.

It is found in the cell membrane. Its subcellular location is the secreted. It localises to the extracellular space. In terms of biological role, thought to provide a protective, lubricating barrier against particles and infectious agents at mucosal surfaces. This chain is Mucin-16, found in Homo sapiens (Human).